Reading from the N-terminus, the 483-residue chain is Aspartyl/glutamyl-tRNA(Asn/Gln) amidotransferase subunit B (483 aa).

Belongs to the GatB/GatE family. GatB subfamily. In terms of assembly, heterotrimer of A, B and C subunits.

The enzyme catalyses L-glutamyl-tRNA(Gln) + L-glutamine + ATP + H2O = L-glutaminyl-tRNA(Gln) + L-glutamate + ADP + phosphate + H(+). The catalysed reaction is L-aspartyl-tRNA(Asn) + L-glutamine + ATP + H2O = L-asparaginyl-tRNA(Asn) + L-glutamate + ADP + phosphate + 2 H(+). In terms of biological role, allows the formation of correctly charged Asn-tRNA(Asn) or Gln-tRNA(Gln) through the transamidation of misacylated Asp-tRNA(Asn) or Glu-tRNA(Gln) in organisms which lack either or both of asparaginyl-tRNA or glutaminyl-tRNA synthetases. The reaction takes place in the presence of glutamine and ATP through an activated phospho-Asp-tRNA(Asn) or phospho-Glu-tRNA(Gln). The chain is Aspartyl/glutamyl-tRNA(Asn/Gln) amidotransferase subunit B from Rickettsia typhi (strain ATCC VR-144 / Wilmington).